A 267-amino-acid polypeptide reads, in one-letter code: Hydroxynaphthalene reductase-like protein Arp2 (267 aa).

4 residues coordinate NADP(+): I25, N45, D71, and N98. Residues S147 and S148 each act as proton donor in the active site. 4 residues coordinate NADP(+): Y162, K166, V195, and T197. Y162 acts as the Proton acceptor in catalysis. Residue K166 is the Lowers pKa of active site Tyr of the active site.

This sequence belongs to the short-chain dehydrogenases/reductases (SDR) family.

Hydroxynaphthalene reductase-like protein; part of the Pks2 gene cluster that mediates the formation of infectious structures (appressoria), enabling these fungi to kill insects faster. The product of the Pks2 gene cluster is different from the one of Pks1 and has still not been identified. The chain is Hydroxynaphthalene reductase-like protein Arp2 from Metarhizium robertsii (strain ARSEF 23 / ATCC MYA-3075) (Metarhizium anisopliae (strain ARSEF 23)).